The chain runs to 104 residues: Glycine-rich protein (104 aa).

The signal sequence occupies residues 1 to 18; it reads MKSMIAAILFALVATSLA.

This sequence belongs to the non-disulfide-bridged peptide (NDBP) superfamily. As to expression, expressed by the venom gland.

It is found in the secreted. This is Glycine-rich protein from Lychas mucronatus (Chinese swimming scorpion).